The sequence spans 853 residues: Wolframin (853 aa).

The segment at 139 to 179 is disordered; it reads KQLERKMRRIYNLQRKRRRRDDDRSSSSSEGEQEPECEPLE. Basic residues predominate over residues 144–157; sequence KMRRIYNLQRKRRR. Positions 169 to 179 are enriched in acidic residues; the sequence is GEQEPECEPLE. The next 10 helical transmembrane spans lie at 238–258, 259–279, 285–305, 347–367, 373–393, 446–466, 473–493, 513–533, 545–565, and 572–592; these read MIFH…NLIV, SIPN…ISWW, LPLV…CKML, LYFF…TDAW, LTII…YASS, FCLN…IMMA, GVYT…VCIA, IVLF…FVAI, WGST…LALN, and ITML…LPYM. 2 N-linked (GlcNAc...) asparagine glycosylation sites follow: N694 and N769.

Detected in adult brain.

It localises to the membrane. The protein resides in the endoplasmic reticulum. The protein localises to the mitochondrion. Its function is as follows. Participates in the regulation of cellular Ca(2+) homeostasis, at least partly, by modulating the filling state of the endoplasmic reticulum Ca(2+) store. In neurons and glial cells, has a role in maintaining neuronal function and integrity during aging. This Drosophila melanogaster (Fruit fly) protein is Wolframin.